A 556-amino-acid polypeptide reads, in one-letter code: Formate--tetrahydrofolate ligase (556 aa).

65–72 (TPAGEGKS) provides a ligand contact to ATP.

This sequence belongs to the formate--tetrahydrofolate ligase family.

The enzyme catalyses (6S)-5,6,7,8-tetrahydrofolate + formate + ATP = (6R)-10-formyltetrahydrofolate + ADP + phosphate. The protein operates within one-carbon metabolism; tetrahydrofolate interconversion. The polypeptide is Formate--tetrahydrofolate ligase (Streptococcus uberis (strain ATCC BAA-854 / 0140J)).